Reading from the N-terminus, the 276-residue chain is Large ribosomal subunit protein uL2 (276 aa).

The interval 222–276 (GVAMNPIDHPLGGGEGRSSGGRHPVSPWGMPTKGYKTRDRKKASSKLIIKRRGQK) is disordered. Basic residues predominate over residues 259 to 276 (RDRKKASSKLIIKRRGQK).

It belongs to the universal ribosomal protein uL2 family. As to quaternary structure, part of the 50S ribosomal subunit. Forms a bridge to the 30S subunit in the 70S ribosome.

Functionally, one of the primary rRNA binding proteins. Required for association of the 30S and 50S subunits to form the 70S ribosome, for tRNA binding and peptide bond formation. It has been suggested to have peptidyltransferase activity; this is somewhat controversial. Makes several contacts with the 16S rRNA in the 70S ribosome. The sequence is that of Large ribosomal subunit protein uL2 from Nitratidesulfovibrio vulgaris (strain ATCC 29579 / DSM 644 / CCUG 34227 / NCIMB 8303 / VKM B-1760 / Hildenborough) (Desulfovibrio vulgaris).